Reading from the N-terminus, the 200-residue chain is NAD(P)H dehydrogenase (quinone) (200 aa).

The region spanning 4–190 (VLVLYYSTYG…DGARFQGRLV (187 aa)) is the Flavodoxin-like domain. FMN-binding positions include 10 to 15 (STYGHL) and 78 to 80 (TRF). NAD(+) is bound at residue tyrosine 12. Residue tryptophan 98 participates in substrate binding. Residues 113–119 (STATQHG) and histidine 134 contribute to the FMN site.

The protein belongs to the WrbA family. FMN serves as cofactor.

The enzyme catalyses a quinone + NADH + H(+) = a quinol + NAD(+). The catalysed reaction is a quinone + NADPH + H(+) = a quinol + NADP(+). This is NAD(P)H dehydrogenase (quinone) from Acidovorax ebreus (strain TPSY) (Diaphorobacter sp. (strain TPSY)).